The primary structure comprises 486 residues: MEQEGQEKKKEGRLTLVLALRTLIAAFGSSFQYAYNVSVCNSPSELMTEFYNDTYYDRTGELIDEFPLTLLWSVTVSMFPSGGFAGSLLVGPLVNKFGRKGALLFNNIFSIVPAILMGCSKVARSFELIIISRLLVGICAGVSSNVVPMYLGELAPKNLRGALGVESQLFITLGILVAQIFGLRSIRQQKGWPILLGLTGGPAAAACPPFFPESPRYLLIGQEPRCRQKALQSLRGWDSVDRELEEIRREDEAARAAGLVSVRALCAMRGLAWQLISVVPLMWQQLSGVNAIYYYDQIYLSPLDTDTQYYTAATGAVNVLMTVCTVFVVESWARLLLLLGFSPLAPTCCVLTAALALQDTVSWMPYISIVCIIVYVIGHAIGPAIRSLYTEIFLQSGRPPTWWGQVHWLSNFTVGLVFPLIQWAGLYSFIIFGVACLSTTVYTFLIVPETKGKSFIEIIRRFIRMNKVEVSPDREELKDFPPDVSE.

N-acetylmethionine is present on Met-1. Over 1-19 (MEQEGQEKKKEGRLTLVLA) the chain is Cytoplasmic. A helical transmembrane segment spans residues 20-40 (LRTLIAAFGSSFQYAYNVSVC). Position 33 (Tyr-33) interacts with D-fructose. At 41-69 (NSPSELMTEFYNDTYYDRTGELIDEFPLT) the chain is on the extracellular side. Asn-52 carries an N-linked (GlcNAc...) asparagine glycan. The chain crosses the membrane as a helical span at residues 70–92 (LLWSVTVSMFPSGGFAGSLLVGP). Over 93–99 (LVNKFGR) the chain is Cytoplasmic. Residues 100–120 (KGALLFNNIFSIVPAILMGCS) traverse the membrane as a helical segment. The Extracellular segment spans residues 121-127 (KVARSFE). The chain crosses the membrane as a helical span at residues 128–150 (LIIISRLLVGICAGVSSNVVPMY). The Cytoplasmic segment spans residues 151–162 (LGELAPKNLRGA). A helical transmembrane segment spans residues 163-183 (LGVESQLFITLGILVAQIFGL). Gln-168 contributes to the D-fructose binding site. Residues 184–192 (RSIRQQKGW) are Extracellular-facing. A helical transmembrane segment spans residues 193 to 211 (PILLGLTGGPAAAACPPFF). Residues 212-274 (PESPRYLLIG…LCAMRGLAWQ (63 aa)) lie on the Cytoplasmic side of the membrane. The helical transmembrane segment at 275 to 294 (LISVVPLMWQQLSGVNAIYY) threads the bilayer. D-fructose contacts are provided by residues Gln-284 and 292–294 (IYY). At 295–306 (YDQIYLSPLDTD) the chain is on the extracellular side. The helical transmembrane segment at 307 to 327 (TQYYTAATGAVNVLMTVCTVF) threads the bilayer. Residues 328-334 (VVESWAR) are Cytoplasmic-facing. Residues 335–355 (LLLLLGFSPLAPTCCVLTAAL) form a helical membrane-spanning segment. Residues 356–363 (ALQDTVSW) are Extracellular-facing. Residues 364–385 (MPYISIVCIIVYVIGHAIGPAI) traverse the membrane as a helical segment. His-379 is a D-fructose binding site. Residues 386-402 (RSLYTEIFLQSGRPPTW) lie on the Cytoplasmic side of the membrane. Residues 403-421 (WGQVHWLSNFTVGLVFPLI) form a helical membrane-spanning segment. 407–408 (HW) is a D-fructose binding site. Topologically, residues 422-426 (QWAGL) are extracellular. The helical transmembrane segment at 427–447 (YSFIIFGVACLSTTVYTFLIV) threads the bilayer. The Cytoplasmic segment spans residues 448-486 (PETKGKSFIEIIRRFIRMNKVEVSPDREELKDFPPDVSE).

Belongs to the major facilitator superfamily. Sugar transporter (TC 2.A.1.1) family. Glucose transporter subfamily. In terms of tissue distribution, detected in jejunum. Detected at the intestinal brush-border membrane (at protein level). Detected in duodenum, jejunum and kidney.

It localises to the apical cell membrane. Its subcellular location is the cell membrane. The protein resides in the sarcolemma. It catalyses the reaction D-fructose(out) = D-fructose(in). Functionally, functions as a fructose transporter that has only low activity with other monosaccharides. Can mediate the uptake of deoxyglucose, but with low efficiency. Essential for fructose uptake in the small intestine. Plays a role in the regulation of salt uptake and blood pressure in response to dietary fructose. Required for the development of high blood pressure in response to high dietary fructose intake. In Oryctolagus cuniculus (Rabbit), this protein is Solute carrier family 2, facilitated glucose transporter member 5.